The sequence spans 291 residues: Nucleotide-binding protein lwe2422 (291 aa).

13 to 20 (GMSGAGKT) lines the ATP pocket. 63–66 (DLRG) provides a ligand contact to GTP.

Belongs to the RapZ-like family.

Functionally, displays ATPase and GTPase activities. This chain is Nucleotide-binding protein lwe2422, found in Listeria welshimeri serovar 6b (strain ATCC 35897 / DSM 20650 / CCUG 15529 / CIP 8149 / NCTC 11857 / SLCC 5334 / V8).